The primary structure comprises 569 residues: ATP-dependent RNA helicase HAS1 (569 aa).

2 disordered regions span residues M1 to F57 and F71 to L110. Residues E34–D45 show a composition bias toward acidic residues. Basic and acidic residues predominate over residues F71–T85. A Q motif motif is present at residues D105–E133. One can recognise a Helicase ATP-binding domain in the interval I136–Y312. Position 149–156 (A149–T156) interacts with ATP. Positions D259–D262 match the DEAD box motif. Residues G326–I496 enclose the Helicase C-terminal domain.

It belongs to the DEAD box helicase family. DDX18/HAS1 subfamily. Associates in the nucleolus with the 60S and pre-60S ribosomal subunits.

The protein resides in the nucleus. Its subcellular location is the nucleolus. It carries out the reaction ATP + H2O = ADP + phosphate + H(+). ATP-dependent RNA helicase involved in 40S ribosomal subunit biogenesis. Required for the processing and cleavage of 35S pre-rRNA at sites A0, A1, and A2, leading to mature 18S rRNA. In Meyerozyma guilliermondii (strain ATCC 6260 / CBS 566 / DSM 6381 / JCM 1539 / NBRC 10279 / NRRL Y-324) (Yeast), this protein is ATP-dependent RNA helicase HAS1 (HAS1).